A 557-amino-acid chain; its full sequence is Glypican-4 (557 aa).

Positions 1–18 (MARLGLLALLCTLAALSA) are cleaved as a signal peptide. Ser357 is modified (phosphoserine). Ser494, Ser498, and Ser500 each carry an O-linked (Xyl...) (glycosaminoglycan) serine glycan. A glycan (N-linked (GlcNAc...) asparagine) is linked at Asn514. The GPI-anchor amidated serine moiety is linked to residue Ser529. Positions 530–557 (AGGAHAEAKPYLLAALCILFLAVQGEWR) are cleaved as a propeptide — removed in mature form.

This sequence belongs to the glypican family. In terms of tissue distribution, highly expressed in developing brain and kidney.

Its subcellular location is the cell membrane. The protein localises to the secreted. The protein resides in the extracellular space. Cell surface proteoglycan that bears heparan sulfate. May be involved in the development of kidney tubules and of the central nervous system. The polypeptide is Glypican-4 (Gpc4) (Mus musculus (Mouse)).